Consider the following 152-residue polypeptide: CASP-like protein 5C1 (152 aa).

The Cytoplasmic portion of the chain corresponds to 1–12 (MVRTTASFGTSS). Residues 13 to 33 (SFVLRLGQTLFSSASLLFMCF) form a helical membrane-spanning segment. The Extracellular segment spans residues 34 to 44 (NDDEDFYAYTT). A helical transmembrane segment spans residues 45 to 65 (FCYLVTVMGLVTPWSVTLALM). Topologically, residues 66-80 (EAYSILVKKLPMQAT) are cytoplasmic. The helical transmembrane segment at 81–101 (VISVIVAGDFVLSFLSLGGAC) threads the bilayer. The Extracellular segment spans residues 102 to 126 (STASVAVLLMDAGEKQCDRYKLSAT). A helical membrane pass occupies residues 127–147 (MAFLSSFLSFASTFFNFCLLP). Residues 148 to 152 (SLMSH) lie on the Cytoplasmic side of the membrane.

Belongs to the Casparian strip membrane proteins (CASP) family. As to quaternary structure, homodimer and heterodimers.

The protein localises to the cell membrane. In Arabidopsis thaliana (Mouse-ear cress), this protein is CASP-like protein 5C1.